A 468-amino-acid polypeptide reads, in one-letter code: MSQQQDKQPSENKLWGGRFTGATDPLMDLYNASLPYDKVMYDADLTGTKVYTQGLNKLGLITTEELNLIHQGLEQIRQEWHDNKFIIKAGDEDIHTANERRLGEIIGKNISGKVHTGRSRNDQVATDMRIFVRESLLNLSKILHQFITAILERAHKEIDVLMPGYTHLQKAQPIRWAHWLSSYATYFTEDYKRLQEIITRVNQSPLGSGALAGHPYGIDREFLAKGLGFDGVIGNSLTAVSDRDFVVESLFWSTLFMNHISRFSEDLIIYSSGEFGFIKLADAYSTGSSLMPQKKNPDSLELLRGKSGRVFGQLSGFLMSIKSIPSTYNKDMQEDKEPLFDALTTVEHSILIATGVISTLSIDKQNMEKALTMDMLATDLADYLVRKGVPFRETHHISGECVRKAEEEKLSGIDQLSFEQFQQIDSRFEKDVMETFDFEASVERRDALGGTAKSAVLKQLENLKSILS.

3 residues coordinate 2-(N(omega)-L-arginino)succinate: Ser-33, Asn-121, and Thr-166. His-167 serves as the catalytic Proton acceptor. Residue Ser-288 is the Proton donor of the active site. Residues Asn-296, Tyr-328, Gln-333, and Lys-336 each contribute to the 2-(N(omega)-L-arginino)succinate site.

It belongs to the lyase 1 family. Argininosuccinate lyase subfamily. As to quaternary structure, homotetramer.

The catalysed reaction is 2-(N(omega)-L-arginino)succinate = fumarate + L-arginine. It participates in amino-acid biosynthesis; L-arginine biosynthesis; L-arginine from L-ornithine and carbamoyl phosphate: step 3/3. In Candida albicans (Yeast), this protein is Argininosuccinate lyase (ARG4).